The chain runs to 317 residues: (2S)-3-sulfopropanediol dehydratase activating enzyme (317 aa).

The Radical SAM core domain occupies 18 to 306 (HDGPGLRTEL…QMLAEYFNQR (289 aa)). [4Fe-4S] cluster contacts are provided by Cys32, Cys36, Cys39, Cys58, Cys64, Cys67, Cys71, Cys92, Cys95, Cys98, and Cys102. 38–40 (WCS) serves as a coordination point for S-adenosyl-L-methionine. 2 4Fe-4S ferredoxin-type domains span residues 49–82 (AQVG…FTRG) and 83–112 (KLTS…LWGK). S-adenosyl-L-methionine is bound by residues Gly142 and 191–193 (DIK).

It belongs to the organic radical-activating enzymes family. It depends on [4Fe-4S] cluster as a cofactor.

The catalysed reaction is glycyl-[protein] + reduced [flavodoxin] + S-adenosyl-L-methionine = glycin-2-yl radical-[protein] + semiquinone [flavodoxin] + 5'-deoxyadenosine + L-methionine + H(+). It functions in the pathway organosulfur degradation; alkanesulfonate degradation. Its function is as follows. Involved in the degradation of the organosulfur compound 2(S)-dihydroxypropanesulfonate (DHPS). Catalyzes activation of the (2S)-3-sulfopropanediol dehydratase HpfG under anaerobic conditions by generation of an organic free radical on a glycine residue. In Klebsiella oxytoca, this protein is (2S)-3-sulfopropanediol dehydratase activating enzyme.